The sequence spans 692 residues: Translation initiation factor IF-2 (692 aa).

The region spanning 194 to 363 (PRPPIVTVMG…LLVAEMEDLK (170 aa)) is the tr-type G domain. Positions 203-210 (GHVDHGKT) are G1. 203 to 210 (GHVDHGKT) provides a ligand contact to GTP. A G2 region spans residues 228-232 (GITQH). Residues 249–252 (DTPG) form a G3 region. Residues 249–253 (DTPGH) and 303–306 (NKID) contribute to the GTP site. The G4 stretch occupies residues 303–306 (NKID). Positions 339–341 (SAK) are G5.

The protein belongs to the TRAFAC class translation factor GTPase superfamily. Classic translation factor GTPase family. IF-2 subfamily.

The protein resides in the cytoplasm. Functionally, one of the essential components for the initiation of protein synthesis. Protects formylmethionyl-tRNA from spontaneous hydrolysis and promotes its binding to the 30S ribosomal subunits. Also involved in the hydrolysis of GTP during the formation of the 70S ribosomal complex. The polypeptide is Translation initiation factor IF-2 (Thermoanaerobacter sp. (strain X514)).